The sequence spans 91 residues: Cell division topological specificity factor (91 aa).

This sequence belongs to the MinE family.

Functionally, prevents the cell division inhibition by proteins MinC and MinD at internal division sites while permitting inhibition at polar sites. This ensures cell division at the proper site by restricting the formation of a division septum at the midpoint of the long axis of the cell. This is Cell division topological specificity factor from Gloeobacter violaceus (strain ATCC 29082 / PCC 7421).